Here is a 356-residue protein sequence, read N- to C-terminus: Tricetin 3',4',5'-O-trimethyltransferase (356 aa).

123–129 contributes to the substrate binding site; sequence MNQDKVL. The interval 155–173 is substrate binding; the sequence is AFEYHGTDPRFNRVFNEGM. 5 residues coordinate S-adenosyl-L-methionine: Gly-201, Asp-224, Asp-244, Met-245, and Lys-258. His-262 (proton acceptor) is an active-site residue.

The protein belongs to the class I-like SAM-binding methyltransferase superfamily. Cation-independent O-methyltransferase family. COMT subfamily. As to quaternary structure, homodimer. The monomer is fully active and dimerization is not required for sequential methylation. In terms of tissue distribution, expressed in roots, stems and leaves.

The catalysed reaction is tricetin + 3 S-adenosyl-L-methionine = 3',4',5'-O-trimethyltricetin + 3 S-adenosyl-L-homocysteine + 3 H(+). Its function is as follows. Flavonoid B-ring-specific O-methyltransferase with a preference for flavones &gt; dihydroflavones &gt; flavonols that possess at least two B-ring hydroxyl groups. Active with tricetin, 5-hydroxyferulic acid, luteolin, quercitin, eriodictyol, quercetagetin, taxifolin, gossypetin and myricetin. No activity with naringenin, apigenin, kaempferol, 7,8-dihydroxy- or 5,7,8-trihydroxy flavones, chlorogenic acid, gallic acid or daphnetin. Catalyzes the sequential O-methylation of tricetin via 3'-O-methyltricetin, 3',5'-O-methyltricetin to 3',4',5'-O-trimethyltricetin. May also be involved in S lignin biosynthesis. In Triticum aestivum (Wheat), this protein is Tricetin 3',4',5'-O-trimethyltransferase (OMT2).